Consider the following 487-residue polypeptide: Glutamyl-tRNA(Gln) amidotransferase subunit A (487 aa).

Active-site charge relay system residues include lysine 79 and serine 158. Catalysis depends on serine 182, which acts as the Acyl-ester intermediate.

The protein belongs to the amidase family. GatA subfamily. As to quaternary structure, heterotrimer of A, B and C subunits.

The enzyme catalyses L-glutamyl-tRNA(Gln) + L-glutamine + ATP + H2O = L-glutaminyl-tRNA(Gln) + L-glutamate + ADP + phosphate + H(+). In terms of biological role, allows the formation of correctly charged Gln-tRNA(Gln) through the transamidation of misacylated Glu-tRNA(Gln) in organisms which lack glutaminyl-tRNA synthetase. The reaction takes place in the presence of glutamine and ATP through an activated gamma-phospho-Glu-tRNA(Gln). The sequence is that of Glutamyl-tRNA(Gln) amidotransferase subunit A from Ehrlichia ruminantium (strain Welgevonden).